A 347-amino-acid polypeptide reads, in one-letter code: S-adenosylmethionine:tRNA ribosyltransferase-isomerase (347 aa).

It belongs to the QueA family. As to quaternary structure, monomer.

The protein localises to the cytoplasm. It carries out the reaction 7-aminomethyl-7-carbaguanosine(34) in tRNA + S-adenosyl-L-methionine = epoxyqueuosine(34) in tRNA + adenine + L-methionine + 2 H(+). Its pathway is tRNA modification; tRNA-queuosine biosynthesis. In terms of biological role, transfers and isomerizes the ribose moiety from AdoMet to the 7-aminomethyl group of 7-deazaguanine (preQ1-tRNA) to give epoxyqueuosine (oQ-tRNA). The chain is S-adenosylmethionine:tRNA ribosyltransferase-isomerase from Pseudomonas aeruginosa (strain ATCC 15692 / DSM 22644 / CIP 104116 / JCM 14847 / LMG 12228 / 1C / PRS 101 / PAO1).